Here is a 366-residue protein sequence, read N- to C-terminus: Arfaptin-1 (366 aa).

The tract at residues 1–78 (MAEESPKNSA…SSAPPLPCVL (78 aa)) is disordered. At A2 the chain carries N-acetylalanine. S5 is subject to Phosphoserine. Over residues 22-35 (GDAHEHGYNRDLKH) the composition is skewed to basic and acidic residues. Phosphoserine is present on residues S36 and S39. Positions 44 to 53 (SETQITSHGF) are enriched in polar residues. Phosphoserine is present on residues S69, S79, and S125. The AH domain occupies 146–346 (TVDLELEAQI…NQKQLEQTLK (201 aa)). Phosphothreonine is present on T354.

In terms of assembly, forms homodimers or heterodimers with ARFIP2. Interacts with non-myristoylated GTP-bound ARF3, but not to GDP-bound ARF3. Interacts with ARF1. Binds with lower affinity to ARF5 and with very little affinity to ARF6. Interacts with ARL1. Interacts with ATG9A.

Its subcellular location is the golgi apparatus. The protein resides in the trans-Golgi network membrane. Its function is as follows. Plays a role in controlling biogenesis of secretory granules at the trans-Golgi network. Mechanistically, binds ARF-GTP at the neck of a growing secretory granule precursor and forms a protective scaffold. Once the granule precursor has been completely loaded, active PRKD1 phosphorylates ARFIP1 and releases it from ARFs. In turn, ARFs induce fission. Through this mechanism, ensures proper secretory granule formation at the Golgi of pancreatic beta cells. This chain is Arfaptin-1, found in Rattus norvegicus (Rat).